Consider the following 171-residue polypeptide: Myosin regulatory light polypeptide 9 (171 aa).

A compositionally biased stretch (basic residues) spans 1 to 15; sequence MSSKRAKAKTTKKRP. The segment at 1-21 is disordered; that stretch reads MSSKRAKAKTTKKRPQSATSN. Position 2 is an N-acetylserine (Ser-2). At Thr-19 the chain carries Phosphothreonine; by MLCK, CIT and ROCK2. The residue at position 20 (Ser-20) is a Phosphoserine; by CDC42BP, CIT, MLCK, PAK1, ROCK1, ROCK2, DAPK1, DAPK2 and ZIPK/DAPK3. 2 EF-hand domains span residues 29–64 and 98–133; these read SQIQ…LGKN and DPED…MGDR. Residues Asp-42, Asn-44, Asp-46, and Asp-53 each contribute to the Ca(2+) site.

As to quaternary structure, myosin is a hexamer of 2 heavy chains and 4 light chains: interacts with myosin heavy chain MYO19. Interacts with LUZP1; the interaction results in inhibition of phosphorylation of MYL9 by DAPK3. In terms of processing, phosphorylation increases the actin-activated myosin ATPase activity and thereby regulates the contractile activity. It is required to generate the driving force in the migration of the cells but not necessary for localization of myosin-2 at the leading edge. Phosphorylation is required for myotube formation. Phosphorylated by DAPK3; DAPK3-mediated phosphorylation is inhibited by LUZP1. As to expression, smooth muscle tissues and in some, but not all, nonmuscle cells.

The protein localises to the cytoplasm. It localises to the cytoskeleton. Its subcellular location is the cell cortex. Myosin regulatory subunit that plays an important role in regulation of both smooth muscle and nonmuscle cell contractile activity via its phosphorylation. Implicated in cytokinesis, receptor capping, and cell locomotion. In myoblasts, may regulate PIEZO1-dependent cortical actomyosin assembly involved in myotube formation. The chain is Myosin regulatory light polypeptide 9 (Myl9) from Rattus norvegicus (Rat).